Reading from the N-terminus, the 231-residue chain is Flagellar L-ring protein (231 aa).

Positions 1 to 18 are cleaved as a signal peptide; sequence MNRYVSVLALSGIAVLAG. Residue C19 is the site of N-palmitoyl cysteine attachment. C19 is lipidated: S-diacylglycerol cysteine.

The protein belongs to the FlgH family. In terms of assembly, the basal body constitutes a major portion of the flagellar organelle and consists of four rings (L,P,S, and M) mounted on a central rod.

It is found in the cell outer membrane. The protein localises to the bacterial flagellum basal body. Assembles around the rod to form the L-ring and probably protects the motor/basal body from shearing forces during rotation. The sequence is that of Flagellar L-ring protein from Pseudomonas fluorescens (strain SBW25).